The sequence spans 90 residues: Acylphosphatase (90 aa).

In terms of domain architecture, Acylphosphatase-like spans 4–90; that stretch reads TRRVRFYGRV…TEFQDFQIKR (87 aa). Residues R19 and N37 contribute to the active site.

Belongs to the acylphosphatase family.

It catalyses the reaction an acyl phosphate + H2O = a carboxylate + phosphate + H(+). The chain is Acylphosphatase (acyP) from Thermoplasma volcanium (strain ATCC 51530 / DSM 4299 / JCM 9571 / NBRC 15438 / GSS1).